The sequence spans 904 residues: Toll-like receptor 3 (904 aa).

A signal peptide spans 1–23; it reads MRQTLPCIYFWGGLLPFGMLCAS. The 28-residue stretch at 24-51 folds into the LRRNT domain; that stretch reads STTKCTVSHEVADCSHLKLTQVPDDLPT. The Lumenal segment spans residues 24-704; sequence STTKCTVSHE…SCKDSAPFEL (681 aa). A disulfide bridge connects residues C28 and C37. 3 N-linked (GlcNAc...) asparagine glycosylation sites follow: N52, N57, and N70. LRR repeat units lie at residues 52–73, 76–97, 100–121, 124–145, 148–168, and 172–193; these read NITV…NFTR, QLTS…LCQK, MLKV…TFAF, NLTE…PFVK, NLIT…GTQV, and NLQE…ELDI. An intrachain disulfide couples C95 to C122. N124 is a glycosylation site (N-linked (GlcNAc...) asparagine). N196 carries an N-linked (GlcNAc...) asparagine glycan. 2 LRR repeats span residues 198–219 and 222–244; these read SLKK…CFHA and RLFG…LCLE. N247, N252, N265, N275, and N291 each carry an N-linked (GlcNAc...) asparagine glycan. LRR repeat units follow at residues 249-270, 275-296, 299-320, 323-344, 356-377, 380-400, 408-429, 432-454, 465-486, 507-528, 531-552, 563-584, 587-608, and 611-632; these read SIRN…TFLG, NLTM…SFAW, QLEY…SLHG, NVRY…ASLP, CLEH…MFTG, NLKY…TNET, PLHI…AFSW, HLEV…EWRG, YNKY…QRLM, NLTI…MLEG, KLEI…ANPG, HLHI…VFKD, ELKI…VFNN, and SLKS…VFGP. N398 and N413 each carry an N-linked (GlcNAc...) asparagine glycan. The N-linked (GlcNAc...) asparagine glycan is linked to N507. N-linked (GlcNAc...) asparagine glycosylation is found at N636 and N662. Positions 645–698 constitute an LRRCT domain; the sequence is NPFDCTCESIAWFVNWINETHTNIPELSSHYLCNTPPHYHGFPVRLFDTSSCKD. 2 cysteine pairs are disulfide-bonded: C649–C677 and C651–C696. Residues 705-725 traverse the membrane as a helical segment; sequence FFMINTSILLIFIFIVLLIHF. Topologically, residues 726–904 are cytoplasmic; that stretch reads EGWRISFYWN…VALGSKNSVH (179 aa). The 144-residue stretch at 754-897 folds into the TIR domain; sequence FEYAAYIIHA…AFRHKLQVAL (144 aa). Phosphotyrosine is present on Y759. Residues K765, K812, and K831 each participate in a glycyl lysine isopeptide (Lys-Gly) (interchain with G-Cter in ubiquitin) cross-link. Phosphotyrosine is present on Y858.

It belongs to the Toll-like receptor family. Monomer and homodimer; dimerization is triggered by ligand-binding, the signaling unit is composed of one ds-RNA of around 40 bp and two TLR3 molecules, and lateral clustering of signaling units along the length of the ds-RNA ligand is required for TLR3 signal transduction. Interacts (via transmembrane domain) with UNC93B1; the interaction is required for transport from the ER to the endosomes. Interacts with SRC; upon binding of double-stranded RNA. Interacts with TICAM1 (via the TIR domain) in response to poly(I:C) and this interaction is enhanced in the presence of WDFY1. The tyrosine-phosphorylated form (via TIR domain) interacts with WDFY1 (via WD repeat 2) in response to poly(I:C). Heavily N-glycosylated, except on that part of the surface of the ectodomain that is involved in ligand binding. Post-translationally, TLR3 signaling requires a proteolytic cleavage mediated by cathepsins CTSB and CTSH, the cleavage occurs between amino acids 252 and 346. The cleaved form of TLR3 is the predominant form found in endosomes. In terms of processing, ubiquitinated by TRIM3; leading to recognition and sorting of polyubiquitinated TLR3 by the ESCRT complexes. Ubiquitinated by ZNRF1 via 'Lys-63'-linked ubiquitin chains; leading to TLR3 lysosomal trafficking and degradation. Ubiquitinated by RNF170 at Lys-765 via 'Lys-48'-linked ubiquitin chains; leading to TLR3 proteasomal degradation. Expressed at high level in placenta and pancreas. Also detected in CD11c+ immature dendritic cells. Only expressed in dendritic cells and not in other leukocytes, including monocyte precursors. TLR3 is the TLR that is expressed most strongly in the brain, especially in astrocytes, glia, and neurons.

The protein resides in the endoplasmic reticulum membrane. It localises to the endosome membrane. The protein localises to the early endosome. Key component of innate and adaptive immunity. TLRs (Toll-like receptors) control host immune response against pathogens through recognition of molecular patterns specific to microorganisms. TLR3 is a nucleotide-sensing TLR which is activated by double-stranded RNA, a sign of viral infection. Acts via the adapter TRIF/TICAM1, leading to NF-kappa-B activation, IRF3 nuclear translocation, cytokine secretion and the inflammatory response. This chain is Toll-like receptor 3, found in Homo sapiens (Human).